Consider the following 688-residue polypeptide: Polyribonucleotide nucleotidyltransferase (688 aa).

Residues Asp484 and Asp490 each contribute to the Mg(2+) site. Residues 550–609 (PTTEIFNVAPDKIIEIIGQGGRVIREIVEKFEVKIDLNKPSGEVKIMGNKERVLKTKEFI) enclose the KH domain. In terms of domain architecture, S1 motif spans 626-688 (DEVLEAQVKR…NKGKIALDLA (63 aa)).

It belongs to the polyribonucleotide nucleotidyltransferase family. The cofactor is Mg(2+).

It localises to the cytoplasm. The enzyme catalyses RNA(n+1) + phosphate = RNA(n) + a ribonucleoside 5'-diphosphate. Its function is as follows. Involved in mRNA degradation. Catalyzes the phosphorolysis of single-stranded polyribonucleotides processively in the 3'- to 5'-direction. The sequence is that of Polyribonucleotide nucleotidyltransferase from Helicobacter acinonychis (strain Sheeba).